The primary structure comprises 185 residues: Ribosome-recycling factor (185 aa).

The protein belongs to the RRF family.

It localises to the cytoplasm. In terms of biological role, responsible for the release of ribosomes from messenger RNA at the termination of protein biosynthesis. May increase the efficiency of translation by recycling ribosomes from one round of translation to another. The protein is Ribosome-recycling factor of Corynebacterium glutamicum (strain ATCC 13032 / DSM 20300 / JCM 1318 / BCRC 11384 / CCUG 27702 / LMG 3730 / NBRC 12168 / NCIMB 10025 / NRRL B-2784 / 534).